The primary structure comprises 107 residues: CLAVATA3/ESR (CLE)-related protein 10 (107 aa).

The first 23 residues, 1-23, serve as a signal peptide directing secretion; the sequence is MKTNRNRPINILIVFFLLTTARA. N-linked (GlcNAc...) asparagine glycans are attached at residues Asn-27 and Asn-30. The interval 73 to 107 is disordered; the sequence is SRQPLFSPPPPPTEIDQRYGVEKRLVPSGPNPLHN. Over residues 87 to 97 the composition is skewed to basic and acidic residues; the sequence is IDQRYGVEKRL. Pro-99 and Pro-102 each carry hydroxyproline. O-linked (Ara...) hydroxyproline glycosylation is present at Pro-102.

The protein belongs to the CLV3/ESR signal peptide family. The O-glycosylation (arabinosylation) of the hydroxyproline Pro-102 enhances binding affinity of the CLE10p peptide for its receptor. In terms of tissue distribution, expressed in stems, apex, leaves, flowers, siliques and pollen.

It is found in the secreted. It localises to the extracellular space. In terms of biological role, extracellular signal peptide that regulates cell fate. Represses root apical meristem maintenance. Regulates the transition of protophloem cells from proliferation to differentiation, thus impinging on postembryonic growth capacity of the root meristem; this signaling pathway requires CRN and CLV2. The protein is CLAVATA3/ESR (CLE)-related protein 10 of Arabidopsis thaliana (Mouse-ear cress).